A 368-amino-acid polypeptide reads, in one-letter code: D-alanine--D-alanine ligase (368 aa).

The ATP-grasp domain occupies 145-348 (KRLLQGAGLH…YQDLITTLIE (204 aa)). 175–230 (ADQLGLPLFIKPANQGSSVGVNKATTEAEFTAAIEEAFSYDHKVLIEAAIKGREIE) is a binding site for ATP. D302, E315, and N317 together coordinate Mg(2+).

The protein belongs to the D-alanine--D-alanine ligase family. Mg(2+) is required as a cofactor. Mn(2+) serves as cofactor.

It localises to the cytoplasm. It carries out the reaction 2 D-alanine + ATP = D-alanyl-D-alanine + ADP + phosphate + H(+). The protein operates within cell wall biogenesis; peptidoglycan biosynthesis. In terms of biological role, cell wall formation. This Shouchella clausii (strain KSM-K16) (Alkalihalobacillus clausii) protein is D-alanine--D-alanine ligase.